Reading from the N-terminus, the 396-residue chain is Phosphoglycerate kinase (396 aa).

Substrate contacts are provided by residues 21–23 (DLN), Arg-36, 59–62 (HLGR), Arg-113, and Arg-146. ATP contacts are provided by residues Lys-197, Glu-319, and 345–348 (GGDT).

It belongs to the phosphoglycerate kinase family. In terms of assembly, monomer.

It localises to the cytoplasm. The catalysed reaction is (2R)-3-phosphoglycerate + ATP = (2R)-3-phospho-glyceroyl phosphate + ADP. The protein operates within carbohydrate degradation; glycolysis; pyruvate from D-glyceraldehyde 3-phosphate: step 2/5. This chain is Phosphoglycerate kinase, found in Legionella pneumophila (strain Lens).